Reading from the N-terminus, the 105-residue chain is UPF0145 protein Ping_0381 (105 aa).

Belongs to the UPF0145 family.

The chain is UPF0145 protein Ping_0381 from Psychromonas ingrahamii (strain DSM 17664 / CCUG 51855 / 37).